Reading from the N-terminus, the 124-residue chain is MARFLSILLCFAMATGLAAGIRYPDRVLGRCSTHDLSKMEIDTNLDGVYSPHRSFCTCGSGEVYFTAKDRRNHSNYRVYVCGMPTEFCTAENPVRDPKKGNRWLQCRCRQYKMVIYRDWLVLCE.

An N-terminal signal peptide occupies residues 1–20; that stretch reads MARFLSILLCFAMATGLAAG. Positions 21-99 are excised as a propeptide; it reads IRYPDRVLGR…AENPVRDPKK (79 aa).

Contain 2 disulfide bonds. In terms of tissue distribution, expressed by the venom duct.

Its subcellular location is the secreted. Probable neurotoxin. In Conus imperialis (Imperial cone), this protein is Conotoxin Im14.2.